The sequence spans 911 residues: ATP-dependent DNA helicase Q-like 5 (911 aa).

A disordered region spans residues 1–84; that stretch reads MDFDSDSDGS…PPPSPLFTNL (84 aa). Residues 20–48 show a composition bias toward low complexity; that stretch reads SFPSSPPQLQSPAKHVPPVSRKMTSSSSR. The segment covering 54-79 has biased composition (pro residues); the sequence is PTHPPPNPSQEAPVPSPYPPPPPPSP. In terms of domain architecture, Helicase ATP-binding spans 278-448; the sequence is IKMILGGSST…MSSLEIPSTN (171 aa). 291–298 is a binding site for ATP; the sequence is LPTGAGKS. The short motif at 390-393 is the DEAH box element; that stretch reads DEAH. In terms of domain architecture, Helicase C-terminal spans 470 to 628; it reads RMKDLLILME…VFSTETKQHE (159 aa).

It belongs to the helicase family. RecQ subfamily. In terms of tissue distribution, mostly expressed in roots, seedlings, shoots, shoot apical mersitem, flowers, and siliques.

It localises to the nucleus. It carries out the reaction Couples ATP hydrolysis with the unwinding of duplex DNA by translocating in the 3'-5' direction.. The catalysed reaction is ATP + H2O = ADP + phosphate + H(+). Functionally, 3'-5' DNA helicase that may play a role in the repair of DNA. In Arabidopsis thaliana (Mouse-ear cress), this protein is ATP-dependent DNA helicase Q-like 5 (RECQL5).